Here is a 160-residue protein sequence, read N- to C-terminus: SsrA-binding protein (160 aa).

A disordered region spans residues 136 to 160; sequence KRHVEKERDANREVQRAMRSKGKDD.

The protein belongs to the SmpB family.

Its subcellular location is the cytoplasm. In terms of biological role, required for rescue of stalled ribosomes mediated by trans-translation. Binds to transfer-messenger RNA (tmRNA), required for stable association of tmRNA with ribosomes. tmRNA and SmpB together mimic tRNA shape, replacing the anticodon stem-loop with SmpB. tmRNA is encoded by the ssrA gene; the 2 termini fold to resemble tRNA(Ala) and it encodes a 'tag peptide', a short internal open reading frame. During trans-translation Ala-aminoacylated tmRNA acts like a tRNA, entering the A-site of stalled ribosomes, displacing the stalled mRNA. The ribosome then switches to translate the ORF on the tmRNA; the nascent peptide is terminated with the 'tag peptide' encoded by the tmRNA and targeted for degradation. The ribosome is freed to recommence translation, which seems to be the essential function of trans-translation. In Ectopseudomonas mendocina (strain ymp) (Pseudomonas mendocina), this protein is SsrA-binding protein.